The following is a 493-amino-acid chain: Protein nucleotidyltransferase YdiU (493 aa).

The ATP site is built by glycine 94, glycine 96, arginine 97, lysine 117, aspartate 129, glycine 130, arginine 180, and arginine 187. Aspartate 256 serves as the catalytic Proton acceptor. Mg(2+) contacts are provided by asparagine 257 and aspartate 266. Aspartate 266 serves as a coordination point for ATP.

Belongs to the SELO family. Requires Mg(2+) as cofactor. The cofactor is Mn(2+).

The catalysed reaction is L-seryl-[protein] + ATP = 3-O-(5'-adenylyl)-L-seryl-[protein] + diphosphate. The enzyme catalyses L-threonyl-[protein] + ATP = 3-O-(5'-adenylyl)-L-threonyl-[protein] + diphosphate. It catalyses the reaction L-tyrosyl-[protein] + ATP = O-(5'-adenylyl)-L-tyrosyl-[protein] + diphosphate. It carries out the reaction L-histidyl-[protein] + UTP = N(tele)-(5'-uridylyl)-L-histidyl-[protein] + diphosphate. The catalysed reaction is L-seryl-[protein] + UTP = O-(5'-uridylyl)-L-seryl-[protein] + diphosphate. The enzyme catalyses L-tyrosyl-[protein] + UTP = O-(5'-uridylyl)-L-tyrosyl-[protein] + diphosphate. Functionally, nucleotidyltransferase involved in the post-translational modification of proteins. It can catalyze the addition of adenosine monophosphate (AMP) or uridine monophosphate (UMP) to a protein, resulting in modifications known as AMPylation and UMPylation. In Hahella chejuensis (strain KCTC 2396), this protein is Protein nucleotidyltransferase YdiU.